A 487-amino-acid polypeptide reads, in one-letter code: Argininosuccinate lyase (487 aa).

It belongs to the lyase 1 family. Argininosuccinate lyase subfamily.

The protein resides in the cytoplasm. The catalysed reaction is 2-(N(omega)-L-arginino)succinate = fumarate + L-arginine. Its pathway is amino-acid biosynthesis; L-arginine biosynthesis; L-arginine from L-ornithine and carbamoyl phosphate: step 3/3. This is Argininosuccinate lyase from Natranaerobius thermophilus (strain ATCC BAA-1301 / DSM 18059 / JW/NM-WN-LF).